We begin with the raw amino-acid sequence, 637 residues long: Acyl-CoA ligase cm3C (637 aa).

Residues 282–290, 423–428, aspartate 507, arginine 526, and lysine 624 each bind ATP; these read TSGTSGRQK and HAWGLT. Residues 353 to 423 are SBD1; it reads DMQRMLGSVA…SLQPSWEFLH (71 aa). Positions 424-486 are SBD2; it reads AWGLTETCIV…YKAPNMFVGY (63 aa).

The protein belongs to the ATP-dependent AMP-binding enzyme family.

It participates in secondary metabolite biosynthesis. Functionally, acyl-CoA ligase; part of the gene cluster that mediates the biosynthesis of beauveriolides I and III, cyclodepsipeptides acting as inhibitors of the acyl-CoA:cholesterol acyltransferase. The HR-PKS cm3B initiates the biosynthesis of beauveriolides by iteratively catalyzing the formation of the linear polyketide chain. The ATP-dependent acetyl-CoA ligase cm3D converts the polyketide carboxylic acid to a CoA thioester which id shuttled to the first T domain in the NRPS cm3A by the acetyltransferase cm3C. Cm3A contains 13 domains and assembles the polyketide chain, L-phenylalanine, L-alanine, and D-leucine (or D-allo-isoleucine) to form beauveriolide I (or beauveriolide III). The production of both beauveriolides I and III suggests the substrate adaptability of cm3B, using different amino acids as substrates. This is Acyl-CoA ligase cm3C from Cordyceps militaris (strain CM01) (Caterpillar fungus).